The sequence spans 617 residues: MAIETQLPCDGDGVCMRCQVNPPSEETLTCGTCVTPWHVPCLLPESLASSTGEWECPDCSGVVVPSAAPGTGNARPESSGSVLVAAIRAIQADETLTEAEKAKKRQKLMSGGGDDGVDEEEKKKLEIFCSICIQLPERPITTPCGHNFCLKCFEKWAVGQGKLTCMICRSKIPRHVAKNPRINLALVSAIRLANVTKCSVEATAAKVHHIIRNQDRPEKAFTTERAVKTGKANAASGKFFVTIPRDHFGPIPAENDVTRKQGVLVGESWEDRQECRQWGAHFPHIAGIAGQSAVGAQSVALSGGYDDDEDHGEWFLYTGSGGRDLSGNKRINKKQSSDQAFKNMNESLRLSCKMGYPVRVVRSWKEKRSAYAPAEGVRYDGVYRIEKCWSNVGVQGSFKVCRYLFVRCDNEPAPWTSDEHGDRPRPLPNVPELETAADLFVRKESPSWDFDEAEGRWKWMKSPPVSRMALDPEERKKNKRAKNTMKARLLKEFSCQICREVLSLPVTTPCAHNFCKACLEAKFAGITQLRERSNGGRKLRAKKNIMTCPCCTTDLSEFLQNPQVNREMMEIIENFKKSEEEADASISEEEEEESEPPTKKIKMDNNSVGGSGTSLSA.

Residues 12-62 (DGVCMRCQVNPPSEETLTCGTCVTPWHVPCLLPESLASSTGEWECPDCSGV) form a PHD-type zinc finger. The RING-type 1 zinc-finger motif lies at 129–169 (CSICIQLPERPITTPCGHNFCLKCFEKWAVGQGKLTCMICR). One can recognise a YDG domain in the interval 258–407 (TRKQGVLVGE…FKVCRYLFVR (150 aa)). The segment at 495–552 (CQICREVLSLPVTTPCAHNFCKACLEAKFAGITQLRERSNGGRKLRAKKNIMTCPCCT) adopts an RING-type 2 zinc-finger fold. Residues 563-593 (QVNREMMEIIENFKKSEEEADASISEEEEEE) are a coiled coil. The interval 575–617 (FKKSEEEADASISEEEEEESEPPTKKIKMDNNSVGGSGTSLSA) is disordered. Positions 580–595 (EEADASISEEEEEESE) are enriched in acidic residues. Positions 604–617 (DNNSVGGSGTSLSA) are enriched in polar residues.

Expressed in inflorescences and leaves.

The protein resides in the nucleus. The catalysed reaction is S-ubiquitinyl-[E2 ubiquitin-conjugating enzyme]-L-cysteine + [acceptor protein]-L-lysine = [E2 ubiquitin-conjugating enzyme]-L-cysteine + N(6)-ubiquitinyl-[acceptor protein]-L-lysine.. Its pathway is protein modification; protein ubiquitination. In terms of biological role, E3 ubiquitin-protein ligase. Participates in CpG methylation-dependent transcriptional regulation and epigenetic transcriptional silencing. Mediates ubiquitination with the E2 ubiquitin-conjugating enzymes UBC11, UBC8 and UBC8 homologs (e.g. UBC10, UBC11, UBC28 and UBC29) but not with UBC27, UBC30, UBC32, UBC34 and UBC36. Promotes methylation-mediated gene silencing leading, for example, to early flowering. Can bind to CpG, CpNpG, and CpNpN DNA motifs, with a strong preference for methylated forms, and with highest affinity for CpG substrate. This is E3 ubiquitin-protein ligase ORTHRUS 1 (ORTH1) from Arabidopsis thaliana (Mouse-ear cress).